The primary structure comprises 462 residues: Anthranilate synthase component 1 (462 aa).

L-tryptophan contacts are provided by residues Ser-37 and 244–246 (PYM). Residue 279–280 (GT) participates in chorismate binding. Glu-306 contacts Mg(2+). Chorismate is bound by residues Tyr-394, Arg-414, 428-430 (GAG), and Gly-430. Glu-443 provides a ligand contact to Mg(2+).

Belongs to the anthranilate synthase component I family. As to quaternary structure, heterotetramer consisting of two non-identical subunits: a beta subunit (TrpG) and a large alpha subunit (TrpE). Mg(2+) serves as cofactor.

The catalysed reaction is chorismate + L-glutamine = anthranilate + pyruvate + L-glutamate + H(+). The protein operates within amino-acid biosynthesis; L-tryptophan biosynthesis; L-tryptophan from chorismate: step 1/5. Feedback inhibited by tryptophan. Its function is as follows. Part of a heterotetrameric complex that catalyzes the two-step biosynthesis of anthranilate, an intermediate in the biosynthesis of L-tryptophan. In the first step, the glutamine-binding beta subunit (TrpG) of anthranilate synthase (AS) provides the glutamine amidotransferase activity which generates ammonia as a substrate that, along with chorismate, is used in the second step, catalyzed by the large alpha subunit of AS (TrpE) to produce anthranilate. In the absence of TrpG, TrpE can synthesize anthranilate directly from chorismate and high concentrations of ammonia. This Thermus thermophilus (strain ATCC 27634 / DSM 579 / HB8) protein is Anthranilate synthase component 1 (trpE).